The primary structure comprises 547 residues: Chaperonin GroEL (547 aa).

ATP is bound by residues 30–33 (TLGP), lysine 51, 87–91 (DGTTT), glycine 415, 479–481 (NAA), and aspartate 495.

The protein belongs to the chaperonin (HSP60) family. As to quaternary structure, forms a cylinder of 14 subunits composed of two heptameric rings stacked back-to-back. Interacts with the co-chaperonin GroES.

Its subcellular location is the cytoplasm. The enzyme catalyses ATP + H2O + a folded polypeptide = ADP + phosphate + an unfolded polypeptide.. In terms of biological role, together with its co-chaperonin GroES, plays an essential role in assisting protein folding. The GroEL-GroES system forms a nano-cage that allows encapsulation of the non-native substrate proteins and provides a physical environment optimized to promote and accelerate protein folding. This is Chaperonin GroEL from Cupriavidus pinatubonensis (strain JMP 134 / LMG 1197) (Cupriavidus necator (strain JMP 134)).